Reading from the N-terminus, the 970-residue chain is Probable histidine kinase 6 (970 aa).

Over 1–12 (MGKPEARSGWRN) the chain is Cytoplasmic. The chain crosses the membrane as a helical span at residues 13–33 (AAAAAWVLVAVACAAYMHWHL). At 34-306 (RRETMDRAEE…YRQKPPLPWS (273 aa)) the chain is on the extracellular side. The CHASE domain occupies 82–294 (FPSAIDQDTF…GDPFRAHEMR (213 aa)). The chain crosses the membrane as a helical span at residues 307-327 (AITNPLGTFVIWMLVGYIICA). At 328–970 (AWSRYDKVSE…LVVGTKESAV (643 aa)) the chain is on the cytoplasmic side. The Histidine kinase domain occupies 362–651 (TVSHEIRTPM…TFTFSAVLKR (290 aa)). Position 365 is a phosphohistidine; by autocatalysis (His365). Response regulatory domains lie at 676–802 (KAIL…QQLL) and 827–962 (NILI…SRLV). Asp877 is modified (4-aspartylphosphate).

Post-translationally, activation probably requires a transfer of a phosphate group between a His in the transmitter domain and an Asp of the receiver domain. In terms of tissue distribution, highly expressed in spikelets and at lower levels in roots, young leaves, mature leaves and stems.

The protein resides in the cell membrane. The enzyme catalyses ATP + protein L-histidine = ADP + protein N-phospho-L-histidine.. In terms of biological role, cytokinin receptor related to bacterial two-component regulators. Functions as a histidine kinase and transmits the stress signal to a downstream MAPK cascade. In Oryza sativa subsp. japonica (Rice), this protein is Probable histidine kinase 6.